Here is a 110-residue protein sequence, read N- to C-terminus: Iron-sulfur cluster assembly protein CyaY (110 aa).

Belongs to the frataxin family.

Involved in iron-sulfur (Fe-S) cluster assembly. May act as a regulator of Fe-S biogenesis. This Stutzerimonas stutzeri (strain A1501) (Pseudomonas stutzeri) protein is Iron-sulfur cluster assembly protein CyaY.